Consider the following 311-residue polypeptide: Insulin-like growth factor-binding protein 2 (311 aa).

Positions 1 to 36 (MALGGVGRGGAARAAWPRLLLAALAPALALAGPALP) are cleaved as a signal peptide. Residues 38–120 (VLFRCPPCTA…VQGQGTCARP (83 aa)) enclose the IGFBP N-terminal domain. Intrachain disulfides connect cysteine 42/cysteine 70, cysteine 45/cysteine 72, cysteine 53/cysteine 73, cysteine 61/cysteine 76, cysteine 84/cysteine 97, and cysteine 91/cysteine 117. 2 disordered regions span residues 112–168 (QGQG…PLKT) and 188–210 (GKVGKAHHNHEDSKKSRMPTGRT). A Thyroglobulin type-1 domain is found at 209 to 291 (RTPCQQELDQ…APTIRGDPEC (83 aa)). 3 disulfide bridges follow: cysteine 212/cysteine 246, cysteine 257/cysteine 268, and cysteine 270/cysteine 291. The Cell attachment site signature appears at 286 to 288 (RGD).

In terms of assembly, binds IGF2 more than IGF1.

It localises to the secreted. Functionally, inhibits IGF-mediated growth and developmental rates. IGF-binding proteins prolong the half-life of the IGFs and have been shown to either inhibit or stimulate the growth promoting effects of the IGFs on cell culture. They alter the interaction of IGFs with their cell surface receptors. The chain is Insulin-like growth factor-binding protein 2 (IGFBP2) from Gallus gallus (Chicken).